A 344-amino-acid chain; its full sequence is Ubiquitin-associated domain-containing protein 2 (344 aa).

A signal peptide spans M1–P35. The Extracellular segment spans residues H36–K91. A helical membrane pass occupies residues F92 to E112. At A113 to N125 the chain is on the cytoplasmic side. A helical membrane pass occupies residues L126 to P146. Topologically, residues R147–T163 are extracellular. An N-linked (GlcNAc...) asparagine glycan is attached at N161. A helical transmembrane segment spans residues L164 to I184. At S185–H344 the chain is on the cytoplasmic side. The region spanning E304 to H344 is the UBA domain.

As to quaternary structure, interacts with FAF2. Interacts with LMBR1L. Interacts with AMFR and VCP.

Its subcellular location is the endoplasmic reticulum membrane. Restricts trafficking of FAF2 from the endoplasmic reticulum to lipid droplets. In association with LMBR1L and E3 ubiquitin-protein ligase AMFR, negatively regulates the canonical Wnt signaling pathway in the lymphocytes by promoting the ubiquitin-mediated degradation of CTNNB1 and Wnt receptors FZD6 and LRP6. This is Ubiquitin-associated domain-containing protein 2 (UBAC2) from Homo sapiens (Human).